The chain runs to 207 residues: Guanylate kinase (207 aa).

The Guanylate kinase-like domain occupies 3 to 181; that stretch reads GQLFVICGPS…AVEMVVSIVR (179 aa). 10–17 serves as a coordination point for ATP; that stretch reads GPSGAGKT.

This sequence belongs to the guanylate kinase family.

The protein resides in the cytoplasm. The catalysed reaction is GMP + ATP = GDP + ADP. Its function is as follows. Essential for recycling GMP and indirectly, cGMP. The protein is Guanylate kinase (gmk) of Thermotoga maritima (strain ATCC 43589 / DSM 3109 / JCM 10099 / NBRC 100826 / MSB8).